Here is a 191-residue protein sequence, read N- to C-terminus: Glutathione-dependent formaldehyde-activating enzyme (191 aa).

Positions 22-169 (FAGGTLQCLC…LTELGLTPYD (148 aa)) constitute a CENP-V/GFA domain. C29, C31, C50, C52, C55, C97, and C100 together coordinate Zn(2+).

The protein belongs to the Gfa family. The cofactor is Zn(2+).

It carries out the reaction S-(hydroxymethyl)glutathione = glutathione + formaldehyde. It functions in the pathway one-carbon metabolism; formaldehyde degradation; formate from formaldehyde (glutathione route): step 1/3. Functionally, catalyzes the condensation of formaldehyde and glutathione to S-hydroxymethylglutathione. This Xanthomonas campestris pv. campestris (strain B100) protein is Glutathione-dependent formaldehyde-activating enzyme.